The chain runs to 233 residues: ATP-dependent dethiobiotin synthetase BioD (233 aa).

Position 12-17 (12-17 (EVGKTY)) interacts with ATP. Thr-16 contributes to the Mg(2+) binding site. The active site involves Lys-37. ATP contacts are provided by residues Asp-54, 120–123 (EGAG), and 186–187 (ND). Asp-54 and Glu-120 together coordinate Mg(2+).

The protein belongs to the dethiobiotin synthetase family. Homodimer. Mg(2+) is required as a cofactor.

The protein localises to the cytoplasm. It carries out the reaction (7R,8S)-7,8-diammoniononanoate + CO2 + ATP = (4R,5S)-dethiobiotin + ADP + phosphate + 3 H(+). It participates in cofactor biosynthesis; biotin biosynthesis; biotin from 7,8-diaminononanoate: step 1/2. Functionally, catalyzes a mechanistically unusual reaction, the ATP-dependent insertion of CO2 between the N7 and N8 nitrogen atoms of 7,8-diaminopelargonic acid (DAPA, also called 7,8-diammoniononanoate) to form a ureido ring. The protein is ATP-dependent dethiobiotin synthetase BioD of Alteromonas mediterranea (strain DSM 17117 / CIP 110805 / LMG 28347 / Deep ecotype).